The primary structure comprises 84 residues: Beta-defensin 119 (84 aa).

The N-terminal stretch at 1-21 (MKLLYLFLAILLAIEEPVISG) is a signal peptide. 3 cysteine pairs are disulfide-bonded: Cys-28/Cys-55, Cys-35/Cys-49, and Cys-39/Cys-56.

The protein belongs to the beta-defensin family.

The protein resides in the secreted. Functionally, has antibacterial activity. The protein is Beta-defensin 119 (DEFB119) of Gorilla gorilla gorilla (Western lowland gorilla).